The chain runs to 157 residues: Transcriptional repressor NrdR (157 aa).

Positions 1-21 (MKCPNCHKNGSRVVDSRPADN) are disordered. A zinc finger spans residues 3–34 (CPNCHKNGSRVVDSRPADNGHAIRRRRECEQC). The ATP-cone domain maps to 49–139 (LLVIKKNGTR…VYREFKDMHA (91 aa)).

This sequence belongs to the NrdR family. Zn(2+) serves as cofactor.

Functionally, negatively regulates transcription of bacterial ribonucleotide reductase nrd genes and operons by binding to NrdR-boxes. The chain is Transcriptional repressor NrdR from Ligilactobacillus salivarius (strain UCC118) (Lactobacillus salivarius).